Reading from the N-terminus, the 486-residue chain is N-succinylglutamate 5-semialdehyde dehydrogenase (486 aa).

Residue 220 to 225 (GSSRTG) participates in NAD(+) binding. Catalysis depends on residues Glu-243 and Cys-277.

This sequence belongs to the aldehyde dehydrogenase family. AstD subfamily.

It catalyses the reaction N-succinyl-L-glutamate 5-semialdehyde + NAD(+) + H2O = N-succinyl-L-glutamate + NADH + 2 H(+). It functions in the pathway amino-acid degradation; L-arginine degradation via AST pathway; L-glutamate and succinate from L-arginine: step 4/5. Functionally, catalyzes the NAD-dependent reduction of succinylglutamate semialdehyde into succinylglutamate. The protein is N-succinylglutamate 5-semialdehyde dehydrogenase of Shewanella halifaxensis (strain HAW-EB4).